The chain runs to 192 residues: Cilia- and flagella-associated protein 20 (192 aa).

Belongs to the CFAP20 family.

The protein resides in the nucleus. It localises to the cytoplasm. It is found in the cytoskeleton. Its subcellular location is the microtubule organizing center. The protein localises to the centrosome. The protein resides in the centriole. It localises to the cilium basal body. It is found in the cilium axoneme. Cilium- and flagellum-specific protein that plays a role in axonemal structure organization and motility. Microtubule inner protein (MIP) part of the dynein-decorated doublet microtubules (DMTs) in cilia axoneme, which is required for motile cilia beating. Involved in the regulation of the size and morphology of cilia. Required for axonemal microtubules polyglutamylation. Plays a role in cilia stability. The chain is Cilia- and flagella-associated protein 20 (cfap20) from Danio rerio (Zebrafish).